A 539-amino-acid polypeptide reads, in one-letter code: Chaperonin GroEL (539 aa).

Residues 29–32, 86–90, G413, 476–478, and D492 contribute to the ATP site; these read TIGP, DGTTT, and NAA.

Belongs to the chaperonin (HSP60) family. As to quaternary structure, forms a cylinder of 14 subunits composed of two heptameric rings stacked back-to-back. Interacts with the co-chaperonin GroES.

Its subcellular location is the cytoplasm. The enzyme catalyses ATP + H2O + a folded polypeptide = ADP + phosphate + an unfolded polypeptide.. Together with its co-chaperonin GroES, plays an essential role in assisting protein folding. The GroEL-GroES system forms a nano-cage that allows encapsulation of the non-native substrate proteins and provides a physical environment optimized to promote and accelerate protein folding. This Pediococcus pentosaceus (strain ATCC 25745 / CCUG 21536 / LMG 10740 / 183-1w) protein is Chaperonin GroEL.